Here is an 873-residue protein sequence, read N- to C-terminus: Alanine--tRNA ligase (873 aa).

Histidine 562, histidine 566, cysteine 663, and histidine 667 together coordinate Zn(2+).

Belongs to the class-II aminoacyl-tRNA synthetase family. The cofactor is Zn(2+).

It localises to the cytoplasm. The catalysed reaction is tRNA(Ala) + L-alanine + ATP = L-alanyl-tRNA(Ala) + AMP + diphosphate. Catalyzes the attachment of alanine to tRNA(Ala) in a two-step reaction: alanine is first activated by ATP to form Ala-AMP and then transferred to the acceptor end of tRNA(Ala). Also edits incorrectly charged Ser-tRNA(Ala) and Gly-tRNA(Ala) via its editing domain. The sequence is that of Alanine--tRNA ligase from Bordetella petrii (strain ATCC BAA-461 / DSM 12804 / CCUG 43448).